Reading from the N-terminus, the 232-residue chain is 5'-methylthioadenosine/S-adenosylhomocysteine nucleosidase (232 aa).

Glutamate 12 (proton acceptor) is an active-site residue. Substrate-binding positions include glycine 78, methionine 153, and 174-175 (ME). Residue aspartate 198 is the Proton donor of the active site.

It belongs to the PNP/UDP phosphorylase family. MtnN subfamily.

The enzyme catalyses S-adenosyl-L-homocysteine + H2O = S-(5-deoxy-D-ribos-5-yl)-L-homocysteine + adenine. It carries out the reaction S-methyl-5'-thioadenosine + H2O = 5-(methylsulfanyl)-D-ribose + adenine. It catalyses the reaction 5'-deoxyadenosine + H2O = 5-deoxy-D-ribose + adenine. It participates in amino-acid biosynthesis; L-methionine biosynthesis via salvage pathway; S-methyl-5-thio-alpha-D-ribose 1-phosphate from S-methyl-5'-thioadenosine (hydrolase route): step 1/2. Functionally, catalyzes the irreversible cleavage of the glycosidic bond in both 5'-methylthioadenosine (MTA) and S-adenosylhomocysteine (SAH/AdoHcy) to adenine and the corresponding thioribose, 5'-methylthioribose and S-ribosylhomocysteine, respectively. Also cleaves 5'-deoxyadenosine, a toxic by-product of radical S-adenosylmethionine (SAM) enzymes, into 5-deoxyribose and adenine. The chain is 5'-methylthioadenosine/S-adenosylhomocysteine nucleosidase from Anoxybacillus flavithermus (strain DSM 21510 / WK1).